Reading from the N-terminus, the 1128-residue chain is DNA-directed RNA polymerase subunit Rpo2 (1128 aa).

Residues K178, 181-182, K206, 435-439, and 1027-1032 each bind dsDNA; these read SN, RGQPN, and RFGEME. Residues C1061, C1064, C1079, and H1082 each contribute to the Zn(2+) site.

It belongs to the RNA polymerase beta chain family. Part of the 13-subunit RNA polymerase complex. The cofactor is Zn(2+).

It is found in the cytoplasm. It carries out the reaction RNA(n) + a ribonucleoside 5'-triphosphate = RNA(n+1) + diphosphate. In terms of biological role, DNA-dependent RNA polymerase (RNAP) catalyzes the transcription of DNA into RNA using the four ribonucleoside triphosphates as substrates. This subunit is involved in DNA promoter recognition. This chain is DNA-directed RNA polymerase subunit Rpo2, found in Saccharolobus shibatae (strain ATCC 51178 / DSM 5389 / JCM 8931 / NBRC 15437 / B12) (Sulfolobus shibatae).